A 354-amino-acid polypeptide reads, in one-letter code: Methylthioribose-1-phosphate isomerase (354 aa).

Substrate is bound by residues 58-60 (RGA), Arg101, and Gln204. Asp245 (proton donor) is an active-site residue. Residue 255–256 (NK) participates in substrate binding.

The protein belongs to the eIF-2B alpha/beta/delta subunits family. MtnA subfamily.

The enzyme catalyses 5-(methylsulfanyl)-alpha-D-ribose 1-phosphate = 5-(methylsulfanyl)-D-ribulose 1-phosphate. It participates in amino-acid biosynthesis; L-methionine biosynthesis via salvage pathway; L-methionine from S-methyl-5-thio-alpha-D-ribose 1-phosphate: step 1/6. Functionally, catalyzes the interconversion of methylthioribose-1-phosphate (MTR-1-P) into methylthioribulose-1-phosphate (MTRu-1-P). This chain is Methylthioribose-1-phosphate isomerase, found in Stenotrophomonas maltophilia (strain R551-3).